Consider the following 302-residue polypeptide: Sulfate adenylyltransferase subunit 2 (302 aa).

This sequence belongs to the PAPS reductase family. CysD subfamily. Heterodimer composed of CysD, the smaller subunit, and CysN.

It carries out the reaction sulfate + ATP + H(+) = adenosine 5'-phosphosulfate + diphosphate. It participates in sulfur metabolism; hydrogen sulfide biosynthesis; sulfite from sulfate: step 1/3. With CysN forms the ATP sulfurylase (ATPS) that catalyzes the adenylation of sulfate producing adenosine 5'-phosphosulfate (APS) and diphosphate, the first enzymatic step in sulfur assimilation pathway. APS synthesis involves the formation of a high-energy phosphoric-sulfuric acid anhydride bond driven by GTP hydrolysis by CysN coupled to ATP hydrolysis by CysD. This chain is Sulfate adenylyltransferase subunit 2, found in Sodalis glossinidius (strain morsitans).